Consider the following 62-residue polypeptide: uncharacterized protein (62 aa).

2 consecutive transmembrane segments (helical) span residues 7-27 (LLLLFAFAAVFSIMLIGVFIA) and 34-51 (IIASIVLVCAVMGGGFTL).

It localises to the cell membrane. This is an uncharacterized protein from Bacillus subtilis (strain 168).